Reading from the N-terminus, the 555-residue chain is uncharacterized protein (555 aa).

The signal sequence occupies residues 1 to 28 (MRSGLFGVLRWTAVGLVATLVASLALTA). A lipid anchor (N-palmitoyl cysteine) is attached at Cys-29. Cys-29 carries the S-diacylglycerol cysteine lipid modification.

The protein to M.tuberculosis Rv2585c and M.bovis Mb2616c.

The protein resides in the cell membrane. This is an uncharacterized protein from Mycobacterium leprae (strain TN).